The following is a 1039-amino-acid chain: L-arabinokinase (1039 aa).

Residues 662–678 (AAYVAGTILVLMIELGV) form a helical membrane-spanning segment. 693 to 703 (PEGKGVSSSAA) serves as a coordination point for ATP. Catalysis depends on Asp-745, which acts as the Proton acceptor.

It belongs to the GHMP kinase family.

It localises to the membrane. It carries out the reaction L-arabinose + ATP = beta-L-arabinose 1-phosphate + ADP + H(+). Functionally, arabinose kinase. Involved in the salvage pathway which converts free L-arabinose to UDP-L-arabinose. May play a role in arabinose transport. The protein is L-arabinokinase (ARA1) of Arabidopsis thaliana (Mouse-ear cress).